A 340-amino-acid chain; its full sequence is Protein arginine N-methyltransferase 1 (340 aa).

Residues 16 to 311 (KDYYFDSYSH…TCKPAEGNHR (296 aa)) enclose the SAM-dependent MTase PRMT-type domain. Tyr-19 is modified (phosphotyrosine). 5 residues coordinate S-adenosyl-L-methionine: His-29, Arg-38, Gly-62, Asp-84, and Glu-113. Catalysis depends on residues Glu-128 and Glu-137. Ser-176 is subject to Phosphoserine.

It belongs to the class I-like SAM-binding methyltransferase superfamily. Protein arginine N-methyltransferase family. Interacts with pab2.

Its subcellular location is the nucleus. It catalyses the reaction L-arginyl-[protein] + S-adenosyl-L-methionine = N(omega)-methyl-L-arginyl-[protein] + S-adenosyl-L-homocysteine + H(+). It carries out the reaction L-arginyl-[protein] + 2 S-adenosyl-L-methionine = N(omega),N(omega)-dimethyl-L-arginyl-[protein] + 2 S-adenosyl-L-homocysteine + 2 H(+). S-adenosyl-L-methionine-dependent protein-arginine N-methyltransferase that catalyzes both the mono- and asymmetric (type I) dimethylation of the guanidino nitrogens of arginine residues in target proteins. Asymmetrically dimethylates the polyadenylate-binding protein pab2, modulating pab2 oligomerization. This Schizosaccharomyces pombe (strain 972 / ATCC 24843) (Fission yeast) protein is Protein arginine N-methyltransferase 1.